Consider the following 264-residue polypeptide: Orotidine 5'-phosphate decarboxylase (264 aa).

Residues aspartate 37, 59–61 (KTH), 91–100 (DRKFADIGNT), tyrosine 217, and arginine 235 each bind substrate. The active-site Proton donor is the lysine 93.

It belongs to the OMP decarboxylase family.

It carries out the reaction orotidine 5'-phosphate + H(+) = UMP + CO2. Its pathway is pyrimidine metabolism; UMP biosynthesis via de novo pathway; UMP from orotate: step 2/2. The chain is Orotidine 5'-phosphate decarboxylase (URA3) from Torulaspora delbrueckii (Yeast).